The primary structure comprises 169 residues: MPLLDSFTVDHTRMNAPAVRVAKSMATPKGDTITVFDLRFCVPNKEILSERGIHTLEHLFAGFMRDHLNSDSVEIIDISPMGCRTGFYMSLIGTPSESVVADAWLAAMQDVLNVVAQADIPELNEYQCGTYEMHSLEQAQEIARNIIAAGINVNRNDDLSLSDEILKGL.

3 residues coordinate Fe cation: H54, H58, and C128.

The protein belongs to the LuxS family. Homodimer. It depends on Fe cation as a cofactor.

The enzyme catalyses S-(5-deoxy-D-ribos-5-yl)-L-homocysteine = (S)-4,5-dihydroxypentane-2,3-dione + L-homocysteine. Functionally, involved in the synthesis of autoinducer 2 (AI-2) which is secreted by bacteria and is used to communicate both the cell density and the metabolic potential of the environment. The regulation of gene expression in response to changes in cell density is called quorum sensing. Catalyzes the transformation of S-ribosylhomocysteine (RHC) to homocysteine (HC) and 4,5-dihydroxy-2,3-pentadione (DPD). The protein is S-ribosylhomocysteine lyase of Shewanella pealeana (strain ATCC 700345 / ANG-SQ1).